Here is a 339-residue protein sequence, read N- to C-terminus: Ketol-acid reductoisomerase (NADP(+)) (339 aa).

Residues 1 to 182 (MRVYYDRDAD…GGGRAGIIET (182 aa)) form the KARI N-terminal Rossmann domain. NADP(+) is bound by residues 24–27 (YGSQ), Arg48, Ser51, Ser53, and 83–86 (DELQ). His108 is a catalytic residue. NADP(+) is bound at residue Gly134. A KARI C-terminal knotted domain is found at 183–328 (SFREETETDL…ARLRDMMPWI (146 aa)). Positions 191, 195, 227, and 231 each coordinate Mg(2+). Ser252 contributes to the substrate binding site.

Belongs to the ketol-acid reductoisomerase family. The cofactor is Mg(2+).

The catalysed reaction is (2R)-2,3-dihydroxy-3-methylbutanoate + NADP(+) = (2S)-2-acetolactate + NADPH + H(+). The enzyme catalyses (2R,3R)-2,3-dihydroxy-3-methylpentanoate + NADP(+) = (S)-2-ethyl-2-hydroxy-3-oxobutanoate + NADPH + H(+). The protein operates within amino-acid biosynthesis; L-isoleucine biosynthesis; L-isoleucine from 2-oxobutanoate: step 2/4. It participates in amino-acid biosynthesis; L-valine biosynthesis; L-valine from pyruvate: step 2/4. Functionally, involved in the biosynthesis of branched-chain amino acids (BCAA). Catalyzes an alkyl-migration followed by a ketol-acid reduction of (S)-2-acetolactate (S2AL) to yield (R)-2,3-dihydroxy-isovalerate. In the isomerase reaction, S2AL is rearranged via a Mg-dependent methyl migration to produce 3-hydroxy-3-methyl-2-ketobutyrate (HMKB). In the reductase reaction, this 2-ketoacid undergoes a metal-dependent reduction by NADPH to yield (R)-2,3-dihydroxy-isovalerate. The protein is Ketol-acid reductoisomerase (NADP(+)) of Afipia carboxidovorans (strain ATCC 49405 / DSM 1227 / KCTC 32145 / OM5) (Oligotropha carboxidovorans).